Consider the following 473-residue polypeptide: LETM1 domain-containing protein mdm28, mitochondrial (473 aa).

The N-terminal 73 residues, 1 to 73 (MLRNRLFKTP…FYNIGSSRLY (73 aa)), are a transit peptide targeting the mitochondrion. Topologically, residues 74–161 (STETPTPSKV…LTRTLKDIGR (88 aa)) are mitochondrial intermembrane. Residues 162 to 182 (LVPFSVFVVVPFAELLLPIAV) traverse the membrane as a helical segment. The Mitochondrial matrix portion of the chain corresponds to 183–473 (KLFPNLLPST…ESNIPKNERK (291 aa)). The Letm1 RBD domain occupies 205 to 398 (QLRKTRNEVS…LQDTLASIPD (194 aa)). Positions 430-473 (EEEAEHVAEHPDLAKKQTEENKATSKPAVSAKSPESNIPKNERK) are disordered. The span at 434–452 (EHVAEHPDLAKKQTEENKA) shows a compositional bias: basic and acidic residues. Positions 462–473 (SPESNIPKNERK) are enriched in polar residues.

Its subcellular location is the mitochondrion inner membrane. Functionally, involved in mitochondrial potassium homeostasis through the mitochondrial K(+)/H(+) exchange regulation. This chain is LETM1 domain-containing protein mdm28, mitochondrial (mdm28), found in Schizosaccharomyces pombe (strain 972 / ATCC 24843) (Fission yeast).